The chain runs to 564 residues: Centrosomal protein kizuna (564 aa).

Positions methionine 1–glutamine 21 are disordered. A coiled-coil region spans residues arginine 28–serine 50. Disordered regions lie at residues glutamine 178 to alanine 201, threonine 304 to proline 345, glutamate 442 to serine 465, isoleucine 487 to phenylalanine 519, and alanine 531 to aspartate 564. The segment covering glutamine 313–serine 324 has biased composition (low complexity). Over residues serine 447–asparagine 463 the composition is skewed to polar residues. Residues glutamate 493 to phenylalanine 519 show a composition bias toward basic and acidic residues.

The protein belongs to the kizuna family.

Its subcellular location is the cytoplasm. The protein resides in the cytoskeleton. It is found in the microtubule organizing center. It localises to the centrosome. The protein localises to the cilium basal body. Functionally, centrosomal protein required for establishing a robust mitotic centrosome architecture that can endure the forces that converge on the centrosomes during spindle formation. Required for stabilizing the expanded pericentriolar material around the centriole. This chain is Centrosomal protein kizuna (KIZ), found in Gallus gallus (Chicken).